The chain runs to 1119 residues: uncharacterized protein (1119 aa).

A signal peptide spans 1 to 21; that stretch reads MNNIYISLYIFFISYIIQLCF. Residues 170–206 are a coiled coil; that stretch reads NKKKLDKEKKKNVIELKEYLEDLKKRMFDMQKRLNDI. Disordered stretches follow at residues 606–627 and 782–905; these read NNNTNNTNNNSNNNNNNNIFNN and ASVQ…EHDE. Positions 788 to 891 are enriched in basic and acidic residues; it reads DKGEDNNDND…EKDKSRDDNK (104 aa). Positions 890–920 form a coiled coil; sequence NKAQNNNSTDNEEHDEITEQIGFLKNHNQKY.

This is an uncharacterized protein from Plasmodium falciparum (isolate 3D7).